The sequence spans 134 residues: Small ribosomal subunit protein uS8 (134 aa).

It belongs to the universal ribosomal protein uS8 family. As to quaternary structure, part of the 30S ribosomal subunit. Contacts proteins S5 and S12.

Functionally, one of the primary rRNA binding proteins, it binds directly to 16S rRNA central domain where it helps coordinate assembly of the platform of the 30S subunit. The protein is Small ribosomal subunit protein uS8 of Fervidobacterium nodosum (strain ATCC 35602 / DSM 5306 / Rt17-B1).